Consider the following 228-residue polypeptide: Ribonuclease 3 1 (228 aa).

The RNase III domain occupies methionine 1–asparagine 124. Glutamate 37 provides a ligand contact to Mg(2+). Residue aspartate 41 is part of the active site. 2 residues coordinate Mg(2+): serine 110 and glutamate 113. The active site involves glutamate 113. Residues aspartate 153 to lysine 223 form the DRBM domain.

The protein belongs to the ribonuclease III family. As to quaternary structure, homodimer. Mg(2+) is required as a cofactor.

It localises to the cytoplasm. It carries out the reaction Endonucleolytic cleavage to 5'-phosphomonoester.. Its function is as follows. Digests double-stranded RNA. Involved in the processing of primary rRNA transcript to yield the immediate precursors to the large and small rRNAs (23S and 16S). Processes some mRNAs, and tRNAs when they are encoded in the rRNA operon. Processes pre-crRNA and tracrRNA of type II CRISPR loci if present in the organism. The protein is Ribonuclease 3 1 of Nostoc sp. (strain PCC 7120 / SAG 25.82 / UTEX 2576).